A 398-amino-acid chain; its full sequence is Phytoene synthase 2, chloroplastic (398 aa).

The N-terminal 80 residues, 1 to 80, are a transit peptide targeting the chloroplast; sequence MASSSSAAAL…EEAVYEVVLR (80 aa).

It belongs to the phytoene/squalene synthase family. Expressed in leaves and endosperm. Expressed in developing leaves.

The protein resides in the plastid. It is found in the chloroplast membrane. It localises to the chloroplast. The protein localises to the plastoglobule. The enzyme catalyses 2 (2E,6E,10E)-geranylgeranyl diphosphate = 15-cis-phytoene + 2 diphosphate. In terms of biological role, catalyzes the conversion of geranylgeranyl diphosphate to phytoene. Mediates the first committed step in carotenoid biosynthesis. The protein is Phytoene synthase 2, chloroplastic of Oryza sativa subsp. japonica (Rice).